Consider the following 102-residue polypeptide: MYAVVKTGGKQYKVSEGDFLKVEKLEGAVGDTVEFSEILMVGGDKVVIGTPLVPSASVVGKIVEQGKDKKILVFKSKRRKNTRKLNGHRQLRTILKIEKINA.

This sequence belongs to the bacterial ribosomal protein bL21 family. Part of the 50S ribosomal subunit. Contacts protein L20.

In terms of biological role, this protein binds to 23S rRNA in the presence of protein L20. This Citrifermentans bemidjiense (strain ATCC BAA-1014 / DSM 16622 / JCM 12645 / Bem) (Geobacter bemidjiensis) protein is Large ribosomal subunit protein bL21.